An 88-amino-acid chain; its full sequence is Putative regulatory protein Npun_R3866 (88 aa).

Belongs to the RemA family.

This is Putative regulatory protein Npun_R3866 from Nostoc punctiforme (strain ATCC 29133 / PCC 73102).